The primary structure comprises 364 residues: Histidinol-phosphate aminotransferase (364 aa).

Position 226 is an N6-(pyridoxal phosphate)lysine (K226).

This sequence belongs to the class-II pyridoxal-phosphate-dependent aminotransferase family. Histidinol-phosphate aminotransferase subfamily. In terms of assembly, homodimer. The cofactor is pyridoxal 5'-phosphate.

The enzyme catalyses L-histidinol phosphate + 2-oxoglutarate = 3-(imidazol-4-yl)-2-oxopropyl phosphate + L-glutamate. The protein operates within amino-acid biosynthesis; L-histidine biosynthesis; L-histidine from 5-phospho-alpha-D-ribose 1-diphosphate: step 7/9. This Sulfurimonas denitrificans (strain ATCC 33889 / DSM 1251) (Thiomicrospira denitrificans (strain ATCC 33889 / DSM 1251)) protein is Histidinol-phosphate aminotransferase.